The following is a 99-amino-acid chain: Malonate decarboxylase acyl carrier protein (99 aa).

Ser-25 is subject to O-(phosphoribosyl dephospho-coenzyme A)serine.

It belongs to the MdcC family. Post-translationally, covalently binds the prosthetic group of malonate decarboxylase.

It localises to the cytoplasm. Its function is as follows. Subunit of malonate decarboxylase, it is an acyl carrier protein to which acetyl and malonyl thioester residues are bound via a 2'-(5''-phosphoribosyl)-3'-dephospho-CoA prosthetic group and turn over during the catalytic mechanism. The polypeptide is Malonate decarboxylase acyl carrier protein (Pseudomonas putida (Arthrobacter siderocapsulatus)).